We begin with the raw amino-acid sequence, 350 residues long: Divinyl chlorophyll a/b light-harvesting protein PcbB (350 aa).

A run of 6 helical transmembrane segments spans residues 27 to 47 (FLAA…SFTL), 89 to 109 (IVVT…GGLM), 141 to 161 (FILG…VEWA), 202 to 222 (VMGG…WHIV), 244 to 264 (LSWA…WCAS), and 305 to 325 (LTNI…WHAL).

Belongs to the PsbB/PsbC family. IsiA/Pcb subfamily. As to quaternary structure, the antenna complex consists of divinyl chlorophylls (a and b) and divinyl chlorophyll a/b binding proteins. Under iron-starvation forms a complex with PSI, consisting of a PSI trimer surrounded by a ring composed of 18 PcbB subunits. Divinyl chlorophyll a is required as a cofactor. The cofactor is divinyl chlorophyll b.

It localises to the cellular thylakoid membrane. In terms of biological role, the antenna complex functions as a light receptor, it captures and delivers excitation energy to photosystems I. The Prochlorales pcb genes are not related to higher plant LHCs. The sequence is that of Divinyl chlorophyll a/b light-harvesting protein PcbB (pcbB) from Prochlorococcus marinus (strain MIT 9313).